We begin with the raw amino-acid sequence, 196 residues long: Imidazole glycerol phosphate synthase subunit HisH (196 aa).

The Glutamine amidotransferase type-1 domain occupies 2 to 196 (NVVIVDTECA…LKRFLELTLC (195 aa)). Catalysis depends on C77, which acts as the Nucleophile. Residues H175 and E177 contribute to the active site.

Heterodimer of HisH and HisF.

It localises to the cytoplasm. The enzyme catalyses 5-[(5-phospho-1-deoxy-D-ribulos-1-ylimino)methylamino]-1-(5-phospho-beta-D-ribosyl)imidazole-4-carboxamide + L-glutamine = D-erythro-1-(imidazol-4-yl)glycerol 3-phosphate + 5-amino-1-(5-phospho-beta-D-ribosyl)imidazole-4-carboxamide + L-glutamate + H(+). It catalyses the reaction L-glutamine + H2O = L-glutamate + NH4(+). It participates in amino-acid biosynthesis; L-histidine biosynthesis; L-histidine from 5-phospho-alpha-D-ribose 1-diphosphate: step 5/9. In terms of biological role, IGPS catalyzes the conversion of PRFAR and glutamine to IGP, AICAR and glutamate. The HisH subunit catalyzes the hydrolysis of glutamine to glutamate and ammonia as part of the synthesis of IGP and AICAR. The resulting ammonia molecule is channeled to the active site of HisF. This chain is Imidazole glycerol phosphate synthase subunit HisH, found in Idiomarina loihiensis (strain ATCC BAA-735 / DSM 15497 / L2-TR).